The chain runs to 518 residues: Serine hydroxymethyltransferase, mitochondrial (518 aa).

The transit peptide at 1–31 directs the protein to the mitochondrion; the sequence is MAMAMALRKLSSSVNKSSRPLFSASSLYYKS. Residue Lys-287 is modified to N6-(pyridoxal phosphate)lysine.

Belongs to the SHMT family. Homotetramer. It depends on pyridoxal 5'-phosphate as a cofactor.

The protein resides in the mitochondrion. The catalysed reaction is (6R)-5,10-methylene-5,6,7,8-tetrahydrofolate + glycine + H2O = (6S)-5,6,7,8-tetrahydrofolate + L-serine. It functions in the pathway one-carbon metabolism; tetrahydrofolate interconversion. Catalyzes the interconversion of serine and glycine. This Pisum sativum (Garden pea) protein is Serine hydroxymethyltransferase, mitochondrial.